A 118-amino-acid polypeptide reads, in one-letter code: Basic phospholipase A2 3 (118 aa).

Cystine bridges form between Cys11-Cys71, Cys27-Cys117, Cys29-Cys45, Cys44-Cys98, Cys51-Cys91, Cys60-Cys84, and Cys78-Cys89. 3 residues coordinate Ca(2+): Tyr28, Gly30, and Gly32. His48 is an active-site residue. Asp49 is a Ca(2+) binding site. Asp92 is a catalytic residue.

The protein belongs to the phospholipase A2 family. Group I subfamily. D49 sub-subfamily. In terms of assembly, monomer. Requires Ca(2+) as cofactor. Expressed by the venom gland.

It localises to the secreted. It carries out the reaction a 1,2-diacyl-sn-glycero-3-phosphocholine + H2O = a 1-acyl-sn-glycero-3-phosphocholine + a fatty acid + H(+). In terms of biological role, PLA2 catalyzes the calcium-dependent hydrolysis of the 2-acyl groups in 3-sn-phosphoglycerides. The sequence is that of Basic phospholipase A2 3 from Laticauda semifasciata (Black-banded sea krait).